A 397-amino-acid polypeptide reads, in one-letter code: MSSFIFPTYREVHSLQSTVSQLASNSGVKNKLANYGLNVSSVAWEDTSRYLNSCVGSNISDVTLKVNKSRMPIIRSNNFTDVTVDVPVSKLPKLVVGNHDGSQLKTVTLEEYLKDFHLYCGEFTRDRYNLFADRDQHVLTSSQACVLPLNSGEVEFAVDLYNYQSRNEPAVLVIVSTAYGTSAQVVCGGNTELYFNDNSVSRMFKAERIEDFRKSQGRSTSGPMTTEEKALNGIYIYQVPLVYKQERPNYESCFLGFVECDSLEASATFSNDSNNFFEHSARNSRGMSRAILSLGQEKGPYKGIKKTDGGIYKLERDQTKPIRLTVQFYMCTDTINLSDNNVEEISNQIRRIYDQGLNEGSLVVDSVTTKPGLHQPTQKRPTQTTSKPYINDEITML.

Residues 368–391 form a disordered region; that stretch reads TTKPGLHQPTQKRPTQTTSKPYIN. The span at 375–388 shows a compositional bias: polar residues; that stretch reads QPTQKRPTQTTSKP.

This is an uncharacterized protein from Acanthamoeba polyphaga mimivirus (APMV).